The sequence spans 207 residues: GTP-binding protein Rheb homolog 1 (207 aa).

8 residues coordinate GTP: Gly-25, Lys-26, Ser-27, Tyr-42, Thr-45, Asn-126, Asp-129, and Ala-157. Ser-27 is a Mg(2+) binding site. Residues 42–50 (YESTIEDQH) carry the Effector region motif. A Mg(2+)-binding site is contributed by Thr-45. Residues 180 to 193 (NLSPTERPNGNSPK) are compositionally biased toward polar residues. The segment at 180 to 207 (NLSPTERPNGNSPKRNPFKDDGKPCSIS) is disordered. Residues 196–207 (PFKDDGKPCSIS) are compositionally biased toward basic and acidic residues. Cys-204 is subject to Cysteine methyl ester. Cys-204 carries S-farnesyl cysteine lipidation. Residues 205 to 207 (SIS) constitute a propeptide, removed in mature form.

It belongs to the small GTPase superfamily. Rheb family.

It is found in the cell membrane. The enzyme catalyses GTP + H2O = GDP + phosphate + H(+). Its function is as follows. Binds GTP and exhibits intrinsic GTPase activity. The protein is GTP-binding protein Rheb homolog 1 (rheb-1) of Caenorhabditis elegans.